The following is a 137-amino-acid chain: Peptide methionine sulfoxide reductase MsrB (137 aa).

A MsrB domain is found at 7–129; it reads PTENIEKLTD…NSASLNFVDD (123 aa). Residues cysteine 46, cysteine 49, cysteine 95, and cysteine 98 each contribute to the Zn(2+) site. Cysteine 118 (nucleophile) is an active-site residue.

The protein belongs to the MsrB Met sulfoxide reductase family. Requires Zn(2+) as cofactor.

It carries out the reaction L-methionyl-[protein] + [thioredoxin]-disulfide + H2O = L-methionyl-(R)-S-oxide-[protein] + [thioredoxin]-dithiol. This chain is Peptide methionine sulfoxide reductase MsrB, found in Yersinia enterocolitica serotype O:8 / biotype 1B (strain NCTC 13174 / 8081).